Reading from the N-terminus, the 405-residue chain is Transposase from transposon Tn916 (405 aa).

The 85-residue stretch at G79–I163 folds into the Core-binding (CB) domain. The Tyr recombinase domain occupies V186–K392. Residues R225, K264, H343, R346, and H369 contribute to the active site. The active-site O-(3'-phospho-DNA)-tyrosine intermediate is the Y379.

This sequence belongs to the 'phage' integrase family.

The chain is Transposase from transposon Tn916 (Int-Tn) from Enterococcus faecalis (Streptococcus faecalis).